The sequence spans 186 residues: Elongation factor P (186 aa).

This sequence belongs to the elongation factor P family.

Its subcellular location is the cytoplasm. It functions in the pathway protein biosynthesis; polypeptide chain elongation. Functionally, involved in peptide bond synthesis. Stimulates efficient translation and peptide-bond synthesis on native or reconstituted 70S ribosomes in vitro. Probably functions indirectly by altering the affinity of the ribosome for aminoacyl-tRNA, thus increasing their reactivity as acceptors for peptidyl transferase. The chain is Elongation factor P from Shewanella halifaxensis (strain HAW-EB4).